Consider the following 720-residue polypeptide: Putative fatty acid oxidation complex trifunctional enzyme (720 aa).

A 3-hydroxyacyl-CoA dehydrogenase region spans residues 1-384; the sequence is MQNEIKKVCV…SWKYGPFELL (384 aa). The enoyl-CoA hydratase/isomerase stretch occupies residues 453 to 720; the sequence is FVITTKMNCL…TIEKLKAIVK (268 aa).

The protein in the N-terminal section; belongs to the 3-hydroxyacyl-CoA dehydrogenase family. It in the C-terminal section; belongs to the enoyl-CoA hydratase/isomerase family.

The enzyme catalyses a (3S)-3-hydroxyacyl-CoA + NAD(+) = a 3-oxoacyl-CoA + NADH + H(+). The catalysed reaction is a (3S)-3-hydroxyacyl-CoA = a (2E)-enoyl-CoA + H2O. It catalyses the reaction a 4-saturated-(3S)-3-hydroxyacyl-CoA = a (3E)-enoyl-CoA + H2O. It carries out the reaction a (3Z)-enoyl-CoA = a 4-saturated (2E)-enoyl-CoA. The enzyme catalyses a (3E)-enoyl-CoA = a 4-saturated (2E)-enoyl-CoA. The polypeptide is Putative fatty acid oxidation complex trifunctional enzyme (Rickettsia felis (strain ATCC VR-1525 / URRWXCal2) (Rickettsia azadi)).